The primary structure comprises 443 residues: Threonine/serine transporter TdcC (443 aa).

The next 11 helical transmembrane spans lie at 22–42 (TTWT…FFPI), 44–64 (AGFG…PIAF), 97–117 (GVVI…IYGV), 140–160 (FVAL…KDLM), 163–183 (VMSY…LSLI), 207–227 (ILVT…FSPI), 259–279 (ASML…FTLS), 319–339 (ASII…LGTL), 366–386 (ISMI…PNIL), 389–409 (IEAM…MYAI), and 423–443 (DNVF…YKLF).

It belongs to the amino acid/polyamine transporter 2 family. SdaC/TdcC subfamily.

It is found in the cell inner membrane. The enzyme catalyses L-threonine(in) + H(+)(in) = L-threonine(out) + H(+)(out). It carries out the reaction L-serine(in) + H(+)(in) = L-serine(out) + H(+)(out). Functionally, involved in the import of threonine and serine into the cell, with the concomitant import of a proton (symport system). This chain is Threonine/serine transporter TdcC, found in Salmonella paratyphi A (strain ATCC 9150 / SARB42).